Reading from the N-terminus, the 319-residue chain is ATP-dependent 6-phosphofructokinase (319 aa).

An ATP-binding site is contributed by G11. 21-25 (RAVVR) provides a ligand contact to ADP. Residues 72-73 (RC) and 102-105 (GDGS) each bind ATP. D103 contributes to the Mg(2+) binding site. Residue 125–127 (TID) coordinates substrate. D127 serves as the catalytic Proton acceptor. R154 serves as a coordination point for ADP. Substrate contacts are provided by residues R162 and 169–171 (MGR). ADP contacts are provided by residues 185–187 (GAE), R211, and 213–215 (KKH). Substrate contacts are provided by residues E222, R243, and 249 to 252 (HVQR).

This sequence belongs to the phosphofructokinase type A (PFKA) family. ATP-dependent PFK group I subfamily. Prokaryotic clade 'B1' sub-subfamily. As to quaternary structure, homotetramer. Mg(2+) serves as cofactor.

It localises to the cytoplasm. It carries out the reaction beta-D-fructose 6-phosphate + ATP = beta-D-fructose 1,6-bisphosphate + ADP + H(+). The protein operates within carbohydrate degradation; glycolysis; D-glyceraldehyde 3-phosphate and glycerone phosphate from D-glucose: step 3/4. Allosterically activated by ADP and other diphosphonucleosides, and allosterically inhibited by phosphoenolpyruvate. Its function is as follows. Catalyzes the phosphorylation of D-fructose 6-phosphate to fructose 1,6-bisphosphate by ATP, the first committing step of glycolysis. The sequence is that of ATP-dependent 6-phosphofructokinase from Anoxybacillus flavithermus (strain DSM 21510 / WK1).